A 129-amino-acid chain; its full sequence is Putative reactive intermediate deaminase TdcF (129 aa).

Lys-58 bears the N6-(pyridoxal phosphate)lysine mark. Substrate-binding positions include 105–107 and Glu-120; that span reads RSC.

It belongs to the RutC family. Homotrimer.

Its pathway is amino-acid degradation; L-threonine degradation via propanoate pathway. Its function is as follows. May be a post-translational regulator that controls the metabolic fate of L-threonine or the potentially toxic intermediate 2-ketobutyrate. This chain is Putative reactive intermediate deaminase TdcF (tdcF), found in Escherichia coli O6:H1 (strain CFT073 / ATCC 700928 / UPEC).